A 179-amino-acid chain; its full sequence is Large ribosomal subunit protein uL5 (179 aa).

This sequence belongs to the universal ribosomal protein uL5 family. As to quaternary structure, part of the 50S ribosomal subunit; part of the 5S rRNA/L5/L18/L25 subcomplex. Contacts the 5S rRNA and the P site tRNA. Forms a bridge to the 30S subunit in the 70S ribosome.

In terms of biological role, this is one of the proteins that bind and probably mediate the attachment of the 5S RNA into the large ribosomal subunit, where it forms part of the central protuberance. In the 70S ribosome it contacts protein S13 of the 30S subunit (bridge B1b), connecting the 2 subunits; this bridge is implicated in subunit movement. Contacts the P site tRNA; the 5S rRNA and some of its associated proteins might help stabilize positioning of ribosome-bound tRNAs. The sequence is that of Large ribosomal subunit protein uL5 from Alkaliphilus oremlandii (strain OhILAs) (Clostridium oremlandii (strain OhILAs)).